A 166-amino-acid polypeptide reads, in one-letter code: UBA-like domain-containing protein 2 (166 aa).

The tract at residues 120–166 (QQPVWLPPASPTTHLHHHHHHPQPVWPPNSQPTGGPQKAMAAMDGQR) is disordered.

This sequence belongs to the UBALD family.

The chain is UBA-like domain-containing protein 2 (ubald2) from Xenopus tropicalis (Western clawed frog).